We begin with the raw amino-acid sequence, 184 residues long: dITP/XTP pyrophosphatase (184 aa).

Residue 5–10 coordinates substrate; that stretch reads SSNRHK. Residues E33 and D62 each contribute to the Mg(2+) site. Catalysis depends on D62, which acts as the Proton acceptor. Substrate is bound by residues S63, 136-139, K158, and 163-164; these read WGFD and HR.

Belongs to the HAM1 NTPase family. Homodimer. Requires Mg(2+) as cofactor.

The enzyme catalyses XTP + H2O = XMP + diphosphate + H(+). The catalysed reaction is dITP + H2O = dIMP + diphosphate + H(+). It catalyses the reaction ITP + H2O = IMP + diphosphate + H(+). In terms of biological role, pyrophosphatase that catalyzes the hydrolysis of nucleoside triphosphates to their monophosphate derivatives, with a high preference for the non-canonical purine nucleotides XTP (xanthosine triphosphate), dITP (deoxyinosine triphosphate) and ITP. Seems to function as a house-cleaning enzyme that removes non-canonical purine nucleotides from the nucleotide pool, thus preventing their incorporation into DNA/RNA and avoiding chromosomal lesions. The protein is dITP/XTP pyrophosphatase of Korarchaeum cryptofilum (strain OPF8).